Consider the following 146-residue polypeptide: Large ribosomal subunit protein uL15 (146 aa).

2 stretches are compositionally biased toward basic residues: residues 1–13 (MIRK…RMRG) and 22–38 (SKKR…GQAG). Positions 1 to 38 (MIRKRRKITRMRGSRTVGGGCSKKRRGAGHRGGRGQAG) are disordered.

Belongs to the universal ribosomal protein uL15 family. Part of the 50S ribosomal subunit.

In terms of biological role, binds to the 23S rRNA. In Methanothermobacter thermautotrophicus (strain ATCC 29096 / DSM 1053 / JCM 10044 / NBRC 100330 / Delta H) (Methanobacterium thermoautotrophicum), this protein is Large ribosomal subunit protein uL15.